The following is a 361-amino-acid chain: G kinase-anchoring protein 1-A (361 aa).

2 disordered regions span residues 22-111 (DSSS…EDWQ) and 140-183 (FEES…KDFQ). Residues 35–48 (AHSSGKAHSGSAAR) are compositionally biased toward low complexity. Residues 51–79 (NKGNEKKKEKRRKKKEQQQSEANELRNLA) adopt a coiled-coil conformation. Residues 158–168 (KVNKKDKRKNN) show a composition bias toward basic residues. Coiled coils occupy residues 246–296 (KDGR…QEGE) and 326–346 (AALE…VKYQ).

It belongs to the GKAP1 family.

It is found in the golgi apparatus. Its function is as follows. May play a role in the regulation of insulin-dependent IRS1 tyrosine phosphorylation in adipocytes. The polypeptide is G kinase-anchoring protein 1-A (gkap1-a) (Xenopus laevis (African clawed frog)).